Reading from the N-terminus, the 178-residue chain is ATP-dependent protease subunit HslV (178 aa).

The active site involves T7. 3 residues coordinate Na(+): G162, C165, and T168.

Belongs to the peptidase T1B family. HslV subfamily. In terms of assembly, a double ring-shaped homohexamer of HslV is capped on each side by a ring-shaped HslU homohexamer. The assembly of the HslU/HslV complex is dependent on binding of ATP.

The protein localises to the cytoplasm. The catalysed reaction is ATP-dependent cleavage of peptide bonds with broad specificity.. Its activity is regulated as follows. Allosterically activated by HslU binding. Protease subunit of a proteasome-like degradation complex believed to be a general protein degrading machinery. This Herminiimonas arsenicoxydans protein is ATP-dependent protease subunit HslV.